The following is a 160-amino-acid chain: Protein-export protein SecB (160 aa).

Belongs to the SecB family. As to quaternary structure, homotetramer, a dimer of dimers. One homotetramer interacts with 1 SecA dimer.

It localises to the cytoplasm. One of the proteins required for the normal export of preproteins out of the cell cytoplasm. It is a molecular chaperone that binds to a subset of precursor proteins, maintaining them in a translocation-competent state. It also specifically binds to its receptor SecA. This chain is Protein-export protein SecB, found in Beijerinckia indica subsp. indica (strain ATCC 9039 / DSM 1715 / NCIMB 8712).